A 201-amino-acid chain; its full sequence is Large ribosomal subunit protein uL4 (201 aa).

Residues 39-70 (GRQGTKAQKTRSEVSGGGKKPWRQKGTGRARA) form a disordered region.

It belongs to the universal ribosomal protein uL4 family. As to quaternary structure, part of the 50S ribosomal subunit.

Its function is as follows. One of the primary rRNA binding proteins, this protein initially binds near the 5'-end of the 23S rRNA. It is important during the early stages of 50S assembly. It makes multiple contacts with different domains of the 23S rRNA in the assembled 50S subunit and ribosome. Functionally, forms part of the polypeptide exit tunnel. This is Large ribosomal subunit protein uL4 from Marinobacter nauticus (strain ATCC 700491 / DSM 11845 / VT8) (Marinobacter aquaeolei).